The chain runs to 488 residues: L-arabinose isomerase 1 (488 aa).

Residues E306, E331, H348, and H447 each coordinate Mn(2+).

Belongs to the arabinose isomerase family. Requires Mn(2+) as cofactor.

It catalyses the reaction beta-L-arabinopyranose = L-ribulose. It functions in the pathway carbohydrate degradation; L-arabinose degradation via L-ribulose; D-xylulose 5-phosphate from L-arabinose (bacterial route): step 1/3. In terms of biological role, catalyzes the conversion of L-arabinose to L-ribulose. The sequence is that of L-arabinose isomerase 1 from Clostridium acetobutylicum (strain ATCC 824 / DSM 792 / JCM 1419 / IAM 19013 / LMG 5710 / NBRC 13948 / NRRL B-527 / VKM B-1787 / 2291 / W).